The sequence spans 378 residues: Lipid-A-disaccharide synthase (378 aa).

Belongs to the LpxB family.

The catalysed reaction is a lipid X + a UDP-2-N,3-O-bis[(3R)-3-hydroxyacyl]-alpha-D-glucosamine = a lipid A disaccharide + UDP + H(+). Its pathway is bacterial outer membrane biogenesis; LPS lipid A biosynthesis. Its function is as follows. Condensation of UDP-2,3-diacylglucosamine and 2,3-diacylglucosamine-1-phosphate to form lipid A disaccharide, a precursor of lipid A, a phosphorylated glycolipid that anchors the lipopolysaccharide to the outer membrane of the cell. The chain is Lipid-A-disaccharide synthase from Pseudomonas aeruginosa (strain LESB58).